We begin with the raw amino-acid sequence, 452 residues long: MTQKDQSPRVGFVSLGCPKALVDSEQIITQLRAEGYAISGTYDGADLVVVNTCGFIDEAVQESLDAIGEALTENGKVIVTGCLGAKKDAAGHDIVSSVHPKVLAVTGPHALGEVMQAVHTHLPKPHDPFTDLVPAAGIKLTPKHYAYLKISEGCNHRCSFCIIPSMRGDLVSRPVAEVMLEAENLFKAGVKELLVISQDTSAYGVDVKYRTGFWNGRPLKTRMTELVAALGELAAQYGAWVRLHYVYPYPHVDEIIPLMNGGHVLPYLDVPLQHAHPDVLKRMKRPANAEKTLDRIRAWREVCPDLTIRSTFIAGFPGETEAEFETLLDFIAEAELDRVGCFAYSPVEGATANDLPGALPDEVREERRARFMEVAEEVSARRLQRKVGQTLRVLIDEVNQDGGIGRSSADAPEIDGLVYIAPPAKPSQRYRAGDFVQVKITGADGHDLWGEI.

Positions 8–123 constitute an MTTase N-terminal domain; the sequence is PRVGFVSLGC…VMQAVHTHLP (116 aa). Residues cysteine 17, cysteine 53, cysteine 82, cysteine 154, cysteine 158, and cysteine 161 each contribute to the [4Fe-4S] cluster site. A Radical SAM core domain is found at 140 to 381; sequence LTPKHYAYLK…MEVAEEVSAR (242 aa). The region spanning 384-452 is the TRAM domain; that stretch reads QRKVGQTLRV…ADGHDLWGEI (69 aa).

It belongs to the methylthiotransferase family. RimO subfamily. Requires [4Fe-4S] cluster as cofactor.

Its subcellular location is the cytoplasm. The enzyme catalyses L-aspartate(89)-[ribosomal protein uS12]-hydrogen + (sulfur carrier)-SH + AH2 + 2 S-adenosyl-L-methionine = 3-methylsulfanyl-L-aspartate(89)-[ribosomal protein uS12]-hydrogen + (sulfur carrier)-H + 5'-deoxyadenosine + L-methionine + A + S-adenosyl-L-homocysteine + 2 H(+). Its function is as follows. Catalyzes the methylthiolation of an aspartic acid residue of ribosomal protein uS12. The sequence is that of Ribosomal protein uS12 methylthiotransferase RimO from Cupriavidus pinatubonensis (strain JMP 134 / LMG 1197) (Cupriavidus necator (strain JMP 134)).